The chain runs to 311 residues: N-acetyl-gamma-glutamyl-phosphate reductase (311 aa).

The active site involves Cys-117.

It belongs to the NAGSA dehydrogenase family. Type 2 subfamily.

It localises to the cytoplasm. It catalyses the reaction N-acetyl-L-glutamate 5-semialdehyde + phosphate + NADP(+) = N-acetyl-L-glutamyl 5-phosphate + NADPH + H(+). The protein operates within amino-acid biosynthesis; L-arginine biosynthesis; N(2)-acetyl-L-ornithine from L-glutamate: step 3/4. In terms of biological role, catalyzes the NADPH-dependent reduction of N-acetyl-5-glutamyl phosphate to yield N-acetyl-L-glutamate 5-semialdehyde. This is N-acetyl-gamma-glutamyl-phosphate reductase from Brucella anthropi (strain ATCC 49188 / DSM 6882 / CCUG 24695 / JCM 21032 / LMG 3331 / NBRC 15819 / NCTC 12168 / Alc 37) (Ochrobactrum anthropi).